Here is a 261-residue protein sequence, read N- to C-terminus: uncharacterized protein (261 aa).

A signal peptide spans 1–22 (MGYLKKVGMCISLLIVIIFVTS). Residue cysteine 23 is the site of N-palmitoyl cysteine attachment. Residue cysteine 23 is the site of S-diacylglycerol cysteine attachment.

The protein belongs to the staphylococcal tandem lipoprotein family.

The protein localises to the cell membrane. This is an uncharacterized protein from Staphylococcus aureus (strain bovine RF122 / ET3-1).